A 1268-amino-acid chain; its full sequence is Neurocan core protein (1268 aa).

A signal peptide spans 1-22; sequence MGAGSVWASGLLLLWLLLLVAG. In terms of domain architecture, Ig-like V-type spans 37 to 157; it reads RMLKSGSGPV…EQDLVTLEVT (121 aa). Intrachain disulfides connect Cys-58/Cys-139, Cys-181/Cys-252, Cys-205/Cys-226, Cys-279/Cys-354, and Cys-303/Cys-324. Asn-121 carries N-linked (GlcNAc...) asparagine glycosylation. Link domains lie at 159 to 254 and 258 to 356; these read VVFH…YCFA and GGEV…YCFR. A glycan (N-linked (GlcNAc...) asparagine) is linked at Asn-339. Disordered regions lie at residues 363–391, 406–442, 472–540, and 574–630; these read QHGD…ELKP, PLMS…SWPS, PLGT…DQSH, and ISPS…LQAS. O-linked (Xyl...) (chondroitin sulfate) serine glycosylation is found at Ser-380 and Ser-410. Positions 419 to 430 are enriched in polar residues; the sequence is TWTQAPEETLGS. Over residues 575–585 the composition is skewed to low complexity; it reads SPSVPSTESTP. Over residues 608 to 617 the composition is skewed to pro residues; the sequence is PSEPPAPSPG. A compositionally biased stretch (low complexity) spans 618 to 630; the sequence is PSEALSAVSLQAS. The N-linked (GlcNAc...) asparagine glycan is linked to Asn-742. In terms of domain architecture, EGF-like 1 spans 960–996; that stretch reads PTDPCENNPCLHGGTCHTNGTVYGCSCDQGYAGENCE. 11 disulfide bridges follow: Cys-964–Cys-975, Cys-969–Cys-984, Cys-986–Cys-995, Cys-1002–Cys-1013, Cys-1007–Cys-1022, Cys-1024–Cys-1033, Cys-1040–Cys-1051, Cys-1068–Cys-1160, Cys-1136–Cys-1152, Cys-1167–Cys-1210, and Cys-1196–Cys-1223. Residue Asn-978 is glycosylated (N-linked (GlcNAc...) asparagine). One can recognise an EGF-like 2; calcium-binding domain in the interval 998 to 1034; that stretch reads DIDDCLCSPCENGGTCIDEVNGFICLCLPSYGGSLCE. Positions 1036-1165 constitute a C-type lectin domain; sequence DTEGCDRGWH…LPYVCKKGTV (130 aa). Positions 1165 to 1225 constitute a Sushi domain; that stretch reads VLCGPPPAVE…WDRPQIMCIK (61 aa). The N-linked (GlcNAc...) asparagine glycan is linked to Asn-1175. Positions 1228–1255 are enriched in basic residues; the sequence is RSHRMRRHHHHPHRHHKPRKEHRKHKRH. Positions 1228-1268 are disordered; the sequence is RSHRMRRHHHHPHRHHKPRKEHRKHKRHPAEDWEKDEGDFC.

The protein belongs to the aggrecan/versican proteoglycan family. In terms of processing, O-glycosylated; contains chondroitin sulfate. Brain.

Its subcellular location is the secreted. May modulate neuronal adhesion and neurite growth during development by binding to neural cell adhesion molecules (NG-CAM and N-CAM). Chondroitin sulfate proteoglycan; binds to hyaluronic acid. The sequence is that of Neurocan core protein (Ncan) from Mus musculus (Mouse).